The chain runs to 401 residues: Argininosuccinate synthase (401 aa).

Residues 7–15 and Ala-34 each bind ATP; that span reads AYSGGLDTS. L-citrulline-binding residues include Tyr-85 and Ser-90. Position 115 (Gly-115) interacts with ATP. Thr-117, Asn-121, and Asp-122 together coordinate L-aspartate. Residue Asn-121 participates in L-citrulline binding. L-citrulline-binding residues include Arg-125, Ser-174, Ser-183, Glu-259, and Tyr-271.

The protein belongs to the argininosuccinate synthase family. Type 1 subfamily. In terms of assembly, homotetramer.

Its subcellular location is the cytoplasm. The catalysed reaction is L-citrulline + L-aspartate + ATP = 2-(N(omega)-L-arginino)succinate + AMP + diphosphate + H(+). It functions in the pathway amino-acid biosynthesis; L-arginine biosynthesis; L-arginine from L-ornithine and carbamoyl phosphate: step 2/3. In Desulfitobacterium hafniense (strain DSM 10664 / DCB-2), this protein is Argininosuccinate synthase.